The chain runs to 336 residues: 4-hydroxy-3-methylbut-2-enyl diphosphate reductase (336 aa).

C37 contributes to the [4Fe-4S] cluster binding site. The (2E)-4-hydroxy-3-methylbut-2-enyl diphosphate site is built by H66 and H99. 2 residues coordinate dimethylallyl diphosphate: H66 and H99. 2 residues coordinate isopentenyl diphosphate: H66 and H99. C121 is a binding site for [4Fe-4S] cluster. H149 lines the (2E)-4-hydroxy-3-methylbut-2-enyl diphosphate pocket. H149 lines the dimethylallyl diphosphate pocket. An isopentenyl diphosphate-binding site is contributed by H149. The active-site Proton donor is E151. T189 provides a ligand contact to (2E)-4-hydroxy-3-methylbut-2-enyl diphosphate. Position 219 (C219) interacts with [4Fe-4S] cluster. (2E)-4-hydroxy-3-methylbut-2-enyl diphosphate-binding residues include S247, S248, N249, and S292. Residues S247, S248, N249, and S292 each contribute to the dimethylallyl diphosphate site. S247, S248, N249, and S292 together coordinate isopentenyl diphosphate.

The protein belongs to the IspH family. The cofactor is [4Fe-4S] cluster.

The enzyme catalyses isopentenyl diphosphate + 2 oxidized [2Fe-2S]-[ferredoxin] + H2O = (2E)-4-hydroxy-3-methylbut-2-enyl diphosphate + 2 reduced [2Fe-2S]-[ferredoxin] + 2 H(+). It catalyses the reaction dimethylallyl diphosphate + 2 oxidized [2Fe-2S]-[ferredoxin] + H2O = (2E)-4-hydroxy-3-methylbut-2-enyl diphosphate + 2 reduced [2Fe-2S]-[ferredoxin] + 2 H(+). Its pathway is isoprenoid biosynthesis; dimethylallyl diphosphate biosynthesis; dimethylallyl diphosphate from (2E)-4-hydroxy-3-methylbutenyl diphosphate: step 1/1. The protein operates within isoprenoid biosynthesis; isopentenyl diphosphate biosynthesis via DXP pathway; isopentenyl diphosphate from 1-deoxy-D-xylulose 5-phosphate: step 6/6. Functionally, catalyzes the conversion of 1-hydroxy-2-methyl-2-(E)-butenyl 4-diphosphate (HMBPP) into a mixture of isopentenyl diphosphate (IPP) and dimethylallyl diphosphate (DMAPP). Acts in the terminal step of the DOXP/MEP pathway for isoprenoid precursor biosynthesis. The chain is 4-hydroxy-3-methylbut-2-enyl diphosphate reductase from Rhodococcus opacus (strain B4).